Here is a 79-residue protein sequence, read N- to C-terminus: Acyl carrier protein (79 aa).

Residues Ser2–Lys77 form the Carrier domain. At Ser37 the chain carries O-(pantetheine 4'-phosphoryl)serine.

Belongs to the acyl carrier protein (ACP) family. 4'-phosphopantetheine is transferred from CoA to a specific serine of apo-ACP by AcpS. This modification is essential for activity because fatty acids are bound in thioester linkage to the sulfhydryl of the prosthetic group.

It is found in the cytoplasm. The protein operates within lipid metabolism; fatty acid biosynthesis. Carrier of the growing fatty acid chain in fatty acid biosynthesis. This chain is Acyl carrier protein, found in Acidiphilium cryptum (strain JF-5).